The sequence spans 201 residues: MYB-like transcription factor EOBI (201 aa).

2 HTH myb-type domains span residues 10-62 and 63-117; these read DVEV…LNYL and RPDV…QKHI. 2 DNA-binding regions (H-T-H motif) span residues 38–62 and 90–113; these read WNSL…LNYL and WSKI…RTRI. The interval 121 to 170 is disordered; the sequence is DQNMKKPSKCEQNDQKAISTSQASTGPTDTIDSYSPSSYTENTNNNMENI. The segment covering 135 to 159 has biased composition (polar residues); it reads QKAISTSQASTGPTDTIDSYSPSSY. The span at 160–169 shows a compositional bias: low complexity; it reads TENTNNNMEN.

As to expression, expressed exclusively in flower organs. Accumulates mostly in flower limbs, to a lower extent in pistils and flower tubes, and, at low levels, in stamens.

It is found in the nucleus. Its function is as follows. MYB-type transcription factor controlling the production of volatile organic compounds (VOCs), including floral volatile benzenoids and phenylpropanoids (FVBP), in flowers of fragrant cultivars (e.g. cv. Mitchell and cv. V26) by regulating the expression of ODO1, a key regulator of the shikimate pathway, and of several biosynthetic floral scent-related genes (e.g. IGS, EGS, BSMT1, BSMT2, PAL1, PAL2, EPSPS, DAHPS, CS, CM1, ADT1 and PPA-AT). Binds to and activates the promoters of at least ODO1, IGS1 and PAL1. The protein is MYB-like transcription factor EOBI of Petunia hybrida (Petunia).